A 430-amino-acid polypeptide reads, in one-letter code: Type 3 secretion system ATPase (430 aa).

162–167 (GCGKTF) lines the ATP pocket.

The protein belongs to the ATPase alpha/beta chains family. T3SS ATPase subfamily. As to quaternary structure, the core secretion machinery of the T3SS is composed of approximately 20 different proteins, including cytoplasmic components, a base, an export apparatus and a needle. This subunit is part of the cytosolic complex. Forms homohexamers. Interacts directly with MxiN/SctL (stator protein) and Spa13/SctO (stalk protein). Can form a soluble complex with Spa33/SctQ, MxiN/SctL and MxiK/SctK.

The protein resides in the cytoplasm. The catalysed reaction is ATP + H2O + cellular proteinSide 1 = ADP + phosphate + cellular proteinSide 2.. Oligomerization increases ATPase activity. Monomeric forms exhibit low-level ATPase activity by forming short-lived oligomers with active site contributions from at least two protomers. In contrast, oligomers exhibit enhanced ATP hydrolysis rates that likely result from multiple preformed active sites within the oligomeric complex. Oligomerization is important for both enzyme activation and T3SS function. Activity is regulated by MxiN/SctL, which differentially regulates the activity of the monomer and the oligomer: it up-regulates the ATPase activity of the monomer, while it down-regulates the activity of the oligomer. Its function is as follows. ATPase component of the type III secretion system (T3SS), also called injectisome, which is used to inject bacterial effector proteins into eukaryotic host cells. Acts as a molecular motor to provide the energy that is required for the export of proteins. Required for type III secretion apparatus (T3SA) formation, proper protein secretion, host cell invasion and virulence. May play a critical role in T3SS substrate recognition, disassembly of the effector/chaperone complex and unfolding of the effector in an ATP-dependent manner prior to secretion. The chain is Type 3 secretion system ATPase from Shigella flexneri.